A 289-amino-acid chain; its full sequence is Aquaporin PIP2-3 (289 aa).

The segment at 1–25 is disordered; that stretch reads MAKQDIEASGPEAGEFSAKDYTDPP. 2 helical membrane-spanning segments follow: residues 43–63 and 80–100; these read AVIA…ATVI and CGGV…FILV. The NPA 1 motif lies at 112–114; it reads NPA. Transmembrane regions (helical) follow at residues 131-151, 173-193, and 207-227; these read LLYI…VKGF, GTGL…VFSA, and VLAP…TIPI. An NPA 2 motif is present at residues 233 to 235; that stretch reads NPA. The chain crosses the membrane as a helical span at residues 255 to 275; the sequence is IFWVGPLIGAAIAAAYHQYVL.

This sequence belongs to the MIP/aquaporin (TC 1.A.8) family. PIP (TC 1.A.8.11) subfamily.

The protein resides in the cell membrane. Aquaporins facilitate the transport of water and small neutral solutes across cell membranes. This Zea mays (Maize) protein is Aquaporin PIP2-3 (PIP2-3).